Consider the following 287-residue polypeptide: Histone H1 (287 aa).

Residues 1-11 are compositionally biased toward low complexity; it reads MATEEPVIVNE. 2 disordered regions span residues 1 to 58 and 120 to 287; these read MATE…THPP and YKLP…RGRK. Positions 33-51 are enriched in basic residues; sequence GKAKKETKAKKPAAPRKRS. An H15 domain is found at 55–124; that stretch reads THPPYFEMIK…KVKNSYKLPS (70 aa). Positions 135 to 202 are enriched in basic residues; sequence AKKKPAAAKS…KAKPVAKAKP (68 aa). Residues 203–248 show a composition bias toward low complexity; the sequence is KAAAAAKPKAAVKPKAAPAKTKAAVKPNLKAKTTTAKVAKTATRTT. The segment covering 276–287 has biased composition (basic residues); it reads PAKKATPKRGRK.

It belongs to the histone H1/H5 family.

It is found in the nucleus. The protein localises to the chromosome. Its function is as follows. Histones H1 are necessary for the condensation of nucleosome chains into higher-order structures. This chain is Histone H1, found in Solanum lycopersicum (Tomato).